The following is a 252-amino-acid chain: Type III pantothenate kinase (252 aa).

6-13 (DMGNTRLK) serves as a coordination point for ATP. Substrate is bound by residues Y93 and 100-103 (GVDR). D102 acts as the Proton acceptor in catalysis. T126 provides a ligand contact to ATP. Substrate is bound at residue T179.

This sequence belongs to the type III pantothenate kinase family. As to quaternary structure, homodimer. Requires NH4(+) as cofactor. It depends on K(+) as a cofactor.

The protein resides in the cytoplasm. It catalyses the reaction (R)-pantothenate + ATP = (R)-4'-phosphopantothenate + ADP + H(+). It functions in the pathway cofactor biosynthesis; coenzyme A biosynthesis; CoA from (R)-pantothenate: step 1/5. In terms of biological role, catalyzes the phosphorylation of pantothenate (Pan), the first step in CoA biosynthesis. The polypeptide is Type III pantothenate kinase (Cellvibrio japonicus (strain Ueda107) (Pseudomonas fluorescens subsp. cellulosa)).